Reading from the N-terminus, the 293-residue chain is Small ribosomal subunit biogenesis GTPase RsgA (293 aa).

Residues 63–223 form the CP-type G domain; that stretch reads KNQLNRPPIA…VADTPGFSSL (161 aa). GTP contacts are provided by residues 112–115 and 166–174; these read SKTD and GQSGVGKSS. Zn(2+)-binding residues include C247, C252, H254, and C260.

It belongs to the TRAFAC class YlqF/YawG GTPase family. RsgA subfamily. In terms of assembly, monomer. Associates with 30S ribosomal subunit, binds 16S rRNA. It depends on Zn(2+) as a cofactor.

The protein resides in the cytoplasm. Functionally, one of several proteins that assist in the late maturation steps of the functional core of the 30S ribosomal subunit. Helps release RbfA from mature subunits. May play a role in the assembly of ribosomal proteins into the subunit. Circularly permuted GTPase that catalyzes slow GTP hydrolysis, GTPase activity is stimulated by the 30S ribosomal subunit. This Shouchella clausii (strain KSM-K16) (Alkalihalobacillus clausii) protein is Small ribosomal subunit biogenesis GTPase RsgA.